The following is a 1192-amino-acid chain: Protein FAM83H (1192 aa).

5 disordered regions span residues 435–542 (EGMG…VKQG), 557–661 (DGGE…LAEP), 695–720 (SKLE…ESEP), 737–1082 (LSRE…SNII), and 1094–1145 (ILEQ…ERDN). The segment covering 437–447 (MGHDDRGHYDR) has biased composition (basic and acidic residues). Polar residues-rich tracts occupy residues 523-538 (QLFS…QDPS) and 629-652 (SDLG…ASST). 2 stretches are compositionally biased toward basic and acidic residues: residues 737–759 (LSRE…KHAS) and 768–789 (DTKE…EENK). Residues 790–810 (VTQPTVPSASQQITSSLNMND) show a composition bias toward polar residues. Basic and acidic residues predominate over residues 820-834 (DQQEKRKTSKLELDL). A compositionally biased stretch (polar residues) spans 861 to 878 (TSEQSTVKAQEPTVSQTD). 2 stretches are compositionally biased toward basic and acidic residues: residues 880-892 (VPHR…KPKP) and 914-925 (APKKEPVKEPTK). Over residues 926–946 (SLKPFPSPKFLKPFKSSQSSS) the composition is skewed to low complexity. Over residues 994–1005 (ESKDTKALDFLK) the composition is skewed to basic and acidic residues. Over residues 1068-1082 (KPTTSRYQSSTSNII) the composition is skewed to polar residues. Over residues 1107–1122 (QQNEESGKGDGGKDDV) the composition is skewed to basic and acidic residues.

Belongs to the FAM83 family.

Its subcellular location is the cytoplasm. It localises to the cytoskeleton. May play a role in keratin cytoskeleton disassembly. The chain is Protein FAM83H from Danio rerio (Zebrafish).